The primary structure comprises 266 residues: 2-C-methyl-D-erythritol 4-phosphate cytidylyltransferase (266 aa).

Basic and acidic residues predominate over residues 234–251 (ADDARSAEARSAEARSEE). The tract at residues 234-266 (ADDARSAEARSAEARSEEPQFAGARSTDARSGG) is disordered.

Belongs to the IspD/TarI cytidylyltransferase family. IspD subfamily.

The enzyme catalyses 2-C-methyl-D-erythritol 4-phosphate + CTP + H(+) = 4-CDP-2-C-methyl-D-erythritol + diphosphate. Its pathway is isoprenoid biosynthesis; isopentenyl diphosphate biosynthesis via DXP pathway; isopentenyl diphosphate from 1-deoxy-D-xylulose 5-phosphate: step 2/6. Catalyzes the formation of 4-diphosphocytidyl-2-C-methyl-D-erythritol from CTP and 2-C-methyl-D-erythritol 4-phosphate (MEP). The chain is 2-C-methyl-D-erythritol 4-phosphate cytidylyltransferase from Frankia casuarinae (strain DSM 45818 / CECT 9043 / HFP020203 / CcI3).